The following is a 264-amino-acid chain: tRNA pseudouridine synthase A (264 aa).

Residue aspartate 51 is the Nucleophile of the active site. Tyrosine 109 contributes to the substrate binding site.

It belongs to the tRNA pseudouridine synthase TruA family. In terms of assembly, homodimer.

It catalyses the reaction uridine(38/39/40) in tRNA = pseudouridine(38/39/40) in tRNA. In terms of biological role, formation of pseudouridine at positions 38, 39 and 40 in the anticodon stem and loop of transfer RNAs. In Yersinia pseudotuberculosis serotype O:1b (strain IP 31758), this protein is tRNA pseudouridine synthase A.